The sequence spans 142 residues: Large-conductance mechanosensitive channel (142 aa).

3 helical membrane-spanning segments follow: residues 14-34, 38-58, and 82-102; these read VVDL…VNSL, VIMP…YYIP, and GQFL…FMVI.

This sequence belongs to the MscL family. Homopentamer.

The protein resides in the cell inner membrane. Its function is as follows. Channel that opens in response to stretch forces in the membrane lipid bilayer. May participate in the regulation of osmotic pressure changes within the cell. This chain is Large-conductance mechanosensitive channel, found in Methylorubrum populi (strain ATCC BAA-705 / NCIMB 13946 / BJ001) (Methylobacterium populi).